A 313-amino-acid chain; its full sequence is Olfactory receptor 1D2 (313 aa).

Over 1–25 (MDGGNQSEGSEFLLLGMSESPEQQR) the chain is Extracellular. Asparagine 5 is a glycosylation site (N-linked (GlcNAc...) asparagine). A helical membrane pass occupies residues 26–49 (ILFWMFLSMYLVTVLGNVLIILAI). The Cytoplasmic portion of the chain corresponds to 50 to 57 (SSDSRLHT). Residues 58–79 (PMYFFLANLSFTDLFFVTNTIP) form a helical membrane-spanning segment. Residues 80–100 (KMLVNLQSQDKAISYAGCLTQ) lie on the Extracellular side of the membrane. Cysteine 97 and cysteine 189 are joined by a disulfide. The chain crosses the membrane as a helical span at residues 101–120 (LYFLLSLVTLDNLILAVMAY). Residues 121 to 139 (DRYVAICCPLHYVTAMSPR) are Cytoplasmic-facing. Residues 140-158 (LCILLLSLCWVFSVLYGLI) form a helical membrane-spanning segment. At 159-196 (HTLLMTRVTFCGSRKIHYLFCEMYFLLRLACSNIQINH) the chain is on the extracellular side. Asparagine 195 carries N-linked (GlcNAc...) asparagine glycosylation. A helical membrane pass occupies residues 197-219 (TVLXATGCFIFLIPLGFMIXSYA). The Cytoplasmic segment spans residues 220–236 (RIVRAILRIPSATGKYK). The helical transmembrane segment at 237 to 259 (AFSTCASHLAVVSLFYGTLGMVY) threads the bilayer. Topologically, residues 260–271 (LQPLQTYSTKDS) are extracellular. The chain crosses the membrane as a helical span at residues 272 to 291 (VATVMYAVVTPMMNPFIYSL). The Cytoplasmic portion of the chain corresponds to 292–313 (RNKDIHGALGRLLQGKAFQKLT).

Belongs to the G-protein coupled receptor 1 family.

It is found in the cell membrane. In terms of biological role, odorant receptor. The polypeptide is Olfactory receptor 1D2 (OR1D2) (Pongo pygmaeus (Bornean orangutan)).